The following is a 755-amino-acid chain: uncharacterized protein (755 aa).

9 consecutive transmembrane segments (helical) span residues 46-66 (LGLG…GGLY), 70-90 (LKTI…GTIV), 93-113 (GWGL…YLAV), 118-138 (GAMV…NVST), 143-163 (FTSL…IWPF), 411-431 (IAHL…IFVL), 446-466 (LLGT…IQDP), 482-502 (ALLR…ALIL), and 514-534 (ALLS…GLAF).

This sequence belongs to the YccS/YhfK family.

It localises to the cell membrane. This is an uncharacterized protein from Synechocystis sp. (strain ATCC 27184 / PCC 6803 / Kazusa).